The following is a 413-amino-acid chain: CinA-like protein (413 aa).

This sequence belongs to the CinA family.

This Desulfotalea psychrophila (strain LSv54 / DSM 12343) protein is CinA-like protein.